The chain runs to 352 residues: MGKFSKIKKVQEEESAHQKMEWEAAGAKDSSSDDSSDESDNDDQPKQATEETRKRAELWTNRERVLVLCSRGADVRTRYLMKDIKDLLPHAKGDSKLDQQKSLNVLNEIAEMKNCTKVMYFESRKRKDTYLWMSNVEKGPSIKFLVHNVHTMKELKMSGNCLRASRPVLSFDDAFDKKPQLKLIKAVLMQTLGTPHHHPRSQPFVDHVFNFSVGEGDKIWFRNFQIVDESLQLQEVGPRFVLEMVRLFAGSFEGAVLYDNPNYVSPNVIRREHRKGQHSYIEKQLAVKASNIKQAKVTEILAEKTVDLVGKEFDTQNNAAADSEAAAQITAQIEKRRVRKKKSQASKYTGSD.

Positions 1–55 (MGKFSKIKKVQEEESAHQKMEWEAAGAKDSSSDDSSDESDNDDQPKQATEETRKR) are disordered. Over residues 9–22 (KVQEEESAHQKMEW) the composition is skewed to basic and acidic residues. A compositionally biased stretch (acidic residues) spans 32 to 42 (SDDSSDESDND). Residues 43 to 55 (DQPKQATEETRKR) are compositionally biased toward basic and acidic residues. One can recognise a Brix domain in the interval 63 to 253 (ERVLVLCSRG…MVRLFAGSFE (191 aa)).

The protein belongs to the BRX1 family.

It is found in the nucleus. Its subcellular location is the nucleolus. In terms of biological role, required for biogenesis of the 60S ribosomal subunit. In Caenorhabditis elegans, this protein is Ribosome biogenesis protein BRX1 homolog.